We begin with the raw amino-acid sequence, 73 residues long: Large ribosomal subunit protein bL31 (73 aa).

Residues Cys-16, Cys-18, Cys-37, and Cys-40 each coordinate Zn(2+).

This sequence belongs to the bacterial ribosomal protein bL31 family. Type A subfamily. In terms of assembly, part of the 50S ribosomal subunit. Zn(2+) is required as a cofactor.

Functionally, binds the 23S rRNA. The polypeptide is Large ribosomal subunit protein bL31 (Marinobacter nauticus (strain ATCC 700491 / DSM 11845 / VT8) (Marinobacter aquaeolei)).